Here is a 795-residue protein sequence, read N- to C-terminus: Protein ROOT HAIR DEFECTIVE 3 homolog 1 (795 aa).

Residues 1–682 lie on the Cytoplasmic side of the membrane; that stretch reads MDADKSEGCC…EANRRGNNWL (682 aa). Residues 39 to 254 enclose the GB1/RHD3-type G domain; sequence GLSYAVVSIM…IAPGGLAGDR (216 aa). Residue 49–56 coordinates GTP; sequence GPQSSGKS. The stretch at 218–244 forms a coiled coil; that stretch reads VALSSYEEKEEQFKEQIASLRQRFMHS. Residues 683 to 703 form a helical membrane-spanning segment; sequence PPPWAILALIVLGFNEFMTLL. Residues 704–706 are Lumenal-facing; sequence RNP. Residues 707–727 form a helical membrane-spanning segment; it reads LYLGVMFVAFLLAKALWTQLD. Residues 728–795 lie on the Cytoplasmic side of the membrane; sequence IPGEFRNGAL…PDHKSSSKED (68 aa). The tract at residues 761–795 is disordered; the sequence is QGEDPPAANPENRRSSNNTSSSENPPDHKSSSKED. Residues 775-784 show a composition bias toward low complexity; that stretch reads SSNNTSSSEN. The segment covering 785 to 795 has biased composition (basic and acidic residues); the sequence is PPDHKSSSKED.

This sequence belongs to the TRAFAC class dynamin-like GTPase superfamily. GB1/RHD3 GTPase family. RHD3 subfamily. In terms of tissue distribution, specifically expressed in flowers.

It is found in the endoplasmic reticulum membrane. Probable GTP-binding protein that may be involved in cell development. The chain is Protein ROOT HAIR DEFECTIVE 3 homolog 1 from Arabidopsis thaliana (Mouse-ear cress).